The sequence spans 101 residues: Large ribosomal subunit protein bL21 (101 aa).

It belongs to the bacterial ribosomal protein bL21 family. As to quaternary structure, part of the 50S ribosomal subunit. Contacts protein L20.

Functionally, this protein binds to 23S rRNA in the presence of protein L20. This chain is Large ribosomal subunit protein bL21, found in Micrococcus luteus (strain ATCC 4698 / DSM 20030 / JCM 1464 / CCM 169 / CCUG 5858 / IAM 1056 / NBRC 3333 / NCIMB 9278 / NCTC 2665 / VKM Ac-2230) (Micrococcus lysodeikticus).